The sequence spans 349 residues: tRNA pseudouridine synthase D (349 aa).

F27 provides a ligand contact to substrate. D80 functions as the Nucleophile in the catalytic mechanism. N129 provides a ligand contact to substrate. Positions 155-303 (GVPNYFGAQR…VEAARRAMLL (149 aa)) constitute a TRUD domain. F329 is a substrate binding site.

Belongs to the pseudouridine synthase TruD family.

It catalyses the reaction uridine(13) in tRNA = pseudouridine(13) in tRNA. Its function is as follows. Responsible for synthesis of pseudouridine from uracil-13 in transfer RNAs. This chain is tRNA pseudouridine synthase D, found in Escherichia coli O6:K15:H31 (strain 536 / UPEC).